The sequence spans 81 residues: Photosystem I iron-sulfur center (81 aa).

4Fe-4S ferredoxin-type domains follow at residues 2 to 31 (VHVV…MVPW) and 39 to 68 (IASS…IRVY). [4Fe-4S] cluster contacts are provided by Cys11, Cys14, Cys17, Cys21, Cys48, Cys51, Cys54, and Cys58.

As to quaternary structure, the eukaryotic PSI reaction center is composed of at least 11 subunits. [4Fe-4S] cluster serves as cofactor.

The protein resides in the plastid. It is found in the chloroplast thylakoid membrane. The enzyme catalyses reduced [plastocyanin] + hnu + oxidized [2Fe-2S]-[ferredoxin] = oxidized [plastocyanin] + reduced [2Fe-2S]-[ferredoxin]. Its function is as follows. Apoprotein for the two 4Fe-4S centers FA and FB of photosystem I (PSI); essential for photochemical activity. FB is the terminal electron acceptor of PSI, donating electrons to ferredoxin. The C-terminus interacts with PsaA/B/D and helps assemble the protein into the PSI complex. Required for binding of PsaD and PsaE to PSI. PSI is a plastocyanin/cytochrome c6-ferredoxin oxidoreductase, converting photonic excitation into a charge separation, which transfers an electron from the donor P700 chlorophyll pair to the spectroscopically characterized acceptors A0, A1, FX, FA and FB in turn. This chain is Photosystem I iron-sulfur center, found in Cyanidium caldarium (Red alga).